The following is a 103-amino-acid chain: UPF0145 protein EF_0241 (103 aa).

It belongs to the UPF0145 family.

The polypeptide is UPF0145 protein EF_0241 (Enterococcus faecalis (strain ATCC 700802 / V583)).